We begin with the raw amino-acid sequence, 284 residues long: MEMO1 family protein M1425_2054 (284 aa).

Belongs to the MEMO1 family.

In Saccharolobus islandicus (strain M.14.25 / Kamchatka #1) (Sulfolobus islandicus), this protein is MEMO1 family protein M1425_2054.